Reading from the N-terminus, the 498-residue chain is Angiopoietin-1 (498 aa).

A signal peptide spans 1–19; that stretch reads MTVFLSFAFFAAILTHIGC. A coiled-coil region spans residues 81–119; sequence QKLQHLEHVMENYTQWLQKLENYIVENMKSEMAQIQQNA. 5 N-linked (GlcNAc...) asparagine glycosylation sites follow: asparagine 92, asparagine 122, asparagine 154, asparagine 243, and asparagine 295. The stretch at 153 to 261 forms a coiled coil; the sequence is LNQTSRLEIQ…LELMDTVHNL (109 aa). The Fibrinogen C-terminal domain occupies 277 to 497; sequence REEEKPFRDC…STTMMIRPLD (221 aa). Intrachain disulfides connect cysteine 286-cysteine 315 and cysteine 439-cysteine 452.

In terms of assembly, homooligomer. Interacts with TEK/TIE2. Interacts with SVEP1/polydom. Interacts with THBD; this interaction significantly inhibits the generation of activated PC and TAFIa/CPB2 by the thrombin/thrombomodulin complex.

It is found in the secreted. Binds and activates TEK/TIE2 receptor by inducing its dimerization and tyrosine phosphorylation. Plays an important role in the regulation of angiogenesis, endothelial cell survival, proliferation, migration, adhesion and cell spreading, reorganization of the actin cytoskeleton, but also maintenance of vascular quiescence. Required for normal angiogenesis and heart development during embryogenesis. After birth, activates or inhibits angiogenesis, depending on the context. Inhibits angiogenesis and promotes vascular stability in quiescent vessels, where endothelial cells have tight contacts. In quiescent vessels, ANGPT1 oligomers recruit TEK to cell-cell contacts, forming complexes with TEK molecules from adjoining cells, and this leads to preferential activation of phosphatidylinositol 3-kinase and the AKT1 signaling cascades. In migrating endothelial cells that lack cell-cell adhesions, ANGT1 recruits TEK to contacts with the extracellular matrix, leading to the formation of focal adhesion complexes, activation of PTK2/FAK and of the downstream kinases MAPK1/ERK2 and MAPK3/ERK1, and ultimately to the stimulation of sprouting angiogenesis. Mediates blood vessel maturation/stability. Implicated in endothelial developmental processes later and distinct from that of VEGF. Appears to play a crucial role in mediating reciprocal interactions between the endothelium and surrounding matrix and mesenchyme. The protein is Angiopoietin-1 (Angpt1) of Mus musculus (Mouse).